Consider the following 277-residue polypeptide: SF-assemblin (277 aa).

The disordered stretch occupies residues 1–20 (MATSGMVSPTSGRPFSPMRS). Residues 1-27 (MATSGMVSPTSGRPFSPMRSSVLTTTG) are nonhelical region. The tract at residues 28 to 277 (SAIKLEHVSE…KMVNMQHNSA (250 aa)) is rod. Residues 70–90 (RLEKSMEAEVKRRAESDKQLQ) are a coiled coil.

It belongs to the SF-assemblin family. The N-terminus is blocked.

Its subcellular location is the cytoplasm. The protein resides in the cytoskeleton. Major component of the striated microtubule-associated fibers (SMAFs; system-I-fibers). This Dunaliella bioculata (Green alga) protein is SF-assemblin.